The sequence spans 149 residues: Oligosaccharyltransferase complex subunit ostc-B (149 aa).

Topologically, residues 1 to 32 are cytoplasmic; the sequence is MESLYRIPFTVLECPNLKLKKPSWLHMPSAMT. Residues 33–53 form a helical membrane-spanning segment; the sequence is VYAMVVVSYFLITGGIIYDVI. At 54–83 the chain is on the extracellular side; it reads VEPPSVGSMTDEHGHQRPVAFLAYRVNGQY. The helical transmembrane segment at 84–104 threads the bilayer; the sequence is IMEGLASSFLFTMGGLGFIIL. Over 105–117 the chain is Cytoplasmic; that stretch reads DRSNAPNIPKLNR. A helical membrane pass occupies residues 118 to 138; it reads FLLLFIGFVCVLLSFFMARVF. Topologically, residues 139–149 are extracellular; that stretch reads MRMKLPGYLMG.

Belongs to the OSTC family. Specific component of the STT3A-containing form of the oligosaccharyltransferase (OST) complex.

It localises to the membrane. The protein operates within protein modification; protein glycosylation. Its function is as follows. Specific component of the STT3A-containing form of the oligosaccharyl transferase (OST) complex that catalyzes the initial transfer of a defined glycan (Glc(3)Man(9)GlcNAc(2) in eukaryotes) from the lipid carrier dolichol-pyrophosphate to an asparagine residue within an Asn-X-Ser/Thr consensus motif in nascent polypeptide chains, the first step in protein N-glycosylation. N-glycosylation occurs cotranslationally and the complex associates with the Sec61 complex at the channel-forming translocon complex that mediates protein translocation across the endoplasmic reticulum (ER). All subunits are required for a maximal enzyme activity. This Xenopus laevis (African clawed frog) protein is Oligosaccharyltransferase complex subunit ostc-B.